The chain runs to 404 residues: Argininosuccinate synthase (404 aa).

ATP contacts are provided by residues 10 to 18 (AYSGGLDTS) and alanine 37. L-citrulline contacts are provided by tyrosine 88 and serine 93. Glycine 118 contacts ATP. L-aspartate is bound by residues threonine 120, asparagine 124, and aspartate 125. Residue asparagine 124 coordinates L-citrulline. L-citrulline is bound by residues arginine 128, serine 178, serine 187, glutamate 263, and tyrosine 275.

It belongs to the argininosuccinate synthase family. Type 1 subfamily. In terms of assembly, homotetramer.

The protein resides in the cytoplasm. The enzyme catalyses L-citrulline + L-aspartate + ATP = 2-(N(omega)-L-arginino)succinate + AMP + diphosphate + H(+). It functions in the pathway amino-acid biosynthesis; L-arginine biosynthesis; L-arginine from L-ornithine and carbamoyl phosphate: step 2/3. This chain is Argininosuccinate synthase, found in Hahella chejuensis (strain KCTC 2396).